Here is a 92-residue protein sequence, read N- to C-terminus: Small ribosomal subunit protein uS19c (92 aa).

The protein belongs to the universal ribosomal protein uS19 family.

It localises to the plastid. The protein localises to the chloroplast. Protein S19 forms a complex with S13 that binds strongly to the 16S ribosomal RNA. The polypeptide is Small ribosomal subunit protein uS19c (Cycas taitungensis (Prince sago)).